The sequence spans 323 residues: ATP synthase gamma chain (323 aa).

The disordered stretch occupies residues 215-237 (PAGGPAKEQEQGDEGGHGAPSAA). Residues 221 to 230 (KEQEQGDEGG) are compositionally biased toward basic and acidic residues.

Belongs to the ATPase gamma chain family. In terms of assembly, F-type ATPases have 2 components, CF(1) - the catalytic core - and CF(0) - the membrane proton channel. CF(1) has five subunits: alpha(3), beta(3), gamma(1), delta(1), epsilon(1). CF(0) has three main subunits: a, b and c.

The protein localises to the cell inner membrane. Its function is as follows. Produces ATP from ADP in the presence of a proton gradient across the membrane. The gamma chain is believed to be important in regulating ATPase activity and the flow of protons through the CF(0) complex. The protein is ATP synthase gamma chain of Sorangium cellulosum (strain So ce56) (Polyangium cellulosum (strain So ce56)).